The following is a 364-amino-acid chain: SH3 and cysteine-rich domain-containing protein 3 (364 aa).

Disordered stretches follow at residues 1–89 (MTEK…NDKP) and 189–244 (NKER…HKQP). A compositionally biased stretch (acidic residues) spans 64–78 (YEEEEEEEEEEEEPP). A Phorbol-ester/DAG-type zinc finger spans residues 89 to 140 (PHKFKDHFFKKPKFCDVCARMIVLNNKFGLRCKNCKTNIHEHCQSYVEMQRC). A compositionally biased stretch (basic and acidic residues) spans 212–242 (ESARPEEGKPQDGNPEGDKKAEKKTPDDKHK). SH3 domains follow at residues 247-306 (QQSH…RVRA) and 307-364 (GERV…LEEI).

As to quaternary structure, interacts (via SH3 domains) with the calcium channels CACNA1S and CACNA1C. Component of a calcium channel complex with CACNA1S and CACNB1. Component of a calcium channel complex with CACNA1C and CACNB1.

Its subcellular location is the cytoplasm. The protein resides in the cell membrane. The protein localises to the sarcolemma. It is found in the T-tubule. Required for normal excitation-contraction coupling in skeletal muscle and for normal muscle contraction in response to membrane depolarization. Required for normal Ca(2+) release from the sarcplasmic reticulum, which ultimately leads to muscle contraction. Probably functions via its effects on muscle calcium channels. Increases CACNA1S channel activity, in addition to its role in enhancing the expression of CACNA1S at the cell membrane. Has a redundant role in promoting the expression of the calcium channel CACNA1S at the cell membrane. Slows down the inactivation rate of the calcium channel CACNA1C. This is SH3 and cysteine-rich domain-containing protein 3 (STAC3) from Homo sapiens (Human).